A 61-amino-acid polypeptide reads, in one-letter code: Small ribosomal subunit protein uS14 (61 aa).

Residues Cys24, Cys27, Cys40, and Cys43 each contribute to the Zn(2+) site.

This sequence belongs to the universal ribosomal protein uS14 family. Zinc-binding uS14 subfamily. In terms of assembly, part of the 30S ribosomal subunit. Contacts proteins S3 and S10. It depends on Zn(2+) as a cofactor.

In terms of biological role, binds 16S rRNA, required for the assembly of 30S particles and may also be responsible for determining the conformation of the 16S rRNA at the A site. This chain is Small ribosomal subunit protein uS14, found in Trichlorobacter lovleyi (strain ATCC BAA-1151 / DSM 17278 / SZ) (Geobacter lovleyi).